The sequence spans 175 residues: Secretion monitor (175 aa).

Positions 1–38 are cleaved as a signal peptide; it reads MSIINFWRQFGRRYFWSHLLLGMVAAGIGMPSLVSAHA.

This sequence belongs to the SecM family.

It localises to the cytoplasm. The protein localises to the cytosol. It is found in the periplasm. Functionally, regulates secA expression by translational coupling of the secM secA operon. Translational pausing at a specific Pro residue 5 residues before the end of the protein may allow disruption of a mRNA repressor helix that normally suppresses secA translation initiation. The sequence is that of Secretion monitor from Proteus mirabilis (strain HI4320).